Here is a 499-residue protein sequence, read N- to C-terminus: Cytochrome P450 ARB_01131 (499 aa).

A signal peptide spans Met-1–Ser-21. Residue Asn-23 is glycosylated (N-linked (GlcNAc...) asparagine). Cys-437 lines the heme pocket.

The protein belongs to the cytochrome P450 family. It depends on heme as a cofactor.

Its function is as follows. Together with an NADPH cytochrome P450 the enzyme system catalyzes the terminal hydroxylation as the first step in the assimilation of alkanes and fatty acids. The polypeptide is Cytochrome P450 ARB_01131 (Arthroderma benhamiae (strain ATCC MYA-4681 / CBS 112371) (Trichophyton mentagrophytes)).